We begin with the raw amino-acid sequence, 427 residues long: cAMP-dependent protein kinase regulatory subunit (427 aa).

The interval glutamine 38–phenylalanine 184 is dimerization and phosphorylation. Residues threonine 96 to arginine 145 form a disordered region. Acidic residues predominate over residues aspartate 110 to phenylalanine 124. Serine 147 bears the Phosphoserine mark. 3',5'-cyclic AMP is bound by residues leucine 185–glutamate 300, glutamate 250, arginine 259, leucine 303–valine 422, glutamate 372, and arginine 381.

The protein belongs to the cAMP-dependent kinase regulatory chain family. Tetramer, composed of 2 regulatory (R) and 2 catalytic (C) subunits. In the presence of cAMP it dissociates into 2 active monomeric C subunits and an R dimer.

The polypeptide is cAMP-dependent protein kinase regulatory subunit (pkar) (Mucor circinelloides f. lusitanicus (Mucor racemosus var. lusitanicus)).